A 273-amino-acid chain; its full sequence is uncharacterized protein (273 aa).

The next 2 helical transmembrane spans lie at 24-44 (VGVSAIDGLIAAVVAGPVTIL) and 103-123 (IVGPWAIGFSLGLSLGGEAWA). The segment at 132–194 (SDLPHHGRQS…QPPAQTQPYR (63 aa)) is disordered. Over residues 164–179 (SSHHIRSPAVARHHKT) the composition is skewed to basic residues. The segment covering 183-192 (TTQPPAQTQP) has biased composition (low complexity).

The protein localises to the cell membrane. This is an uncharacterized protein from Sinorhizobium fredii (strain NBRC 101917 / NGR234).